Here is an 84-residue protein sequence, read N- to C-terminus: Putative antitoxin VapB7 (84 aa).

Functionally, antitoxin component of a possible type II toxin-antitoxin (TA) system. The cognate toxin is VapC7. In Mycobacterium tuberculosis (strain ATCC 25618 / H37Rv), this protein is Putative antitoxin VapB7 (vapB7).